The primary structure comprises 480 residues: Sulfate adenylyltransferase subunit 1 (480 aa).

A tr-type G domain is found at 30–248; it reads KGLLRFLTCG…TVDVKKEASK (219 aa). Residues 39-46 form a G1 region; sequence GSVDDGKS. A GTP-binding site is contributed by 39–46; sequence GSVDDGKS. Positions 97-101 are G2; the sequence is GITID. Residues 118 to 121 are G3; the sequence is DTPG. Residues 118–122 and 173–176 each bind GTP; these read DTPGH and NKMD. A G4 region spans residues 173-176; sequence NKMD. The tract at residues 211–213 is G5; the sequence is SAL.

It belongs to the TRAFAC class translation factor GTPase superfamily. Classic translation factor GTPase family. CysN/NodQ subfamily. In terms of assembly, heterodimer composed of CysD, the smaller subunit, and CysN.

It catalyses the reaction sulfate + ATP + H(+) = adenosine 5'-phosphosulfate + diphosphate. It participates in sulfur metabolism; hydrogen sulfide biosynthesis; sulfite from sulfate: step 1/3. In terms of biological role, with CysD forms the ATP sulfurylase (ATPS) that catalyzes the adenylation of sulfate producing adenosine 5'-phosphosulfate (APS) and diphosphate, the first enzymatic step in sulfur assimilation pathway. APS synthesis involves the formation of a high-energy phosphoric-sulfuric acid anhydride bond driven by GTP hydrolysis by CysN coupled to ATP hydrolysis by CysD. This Photorhabdus laumondii subsp. laumondii (strain DSM 15139 / CIP 105565 / TT01) (Photorhabdus luminescens subsp. laumondii) protein is Sulfate adenylyltransferase subunit 1.